The sequence spans 223 residues: Small ribosomal subunit protein uS3 (223 aa).

Residues 38–106 enclose the KH type-2 domain; it reads IREFIAKQLT…RVHINIVEIK (69 aa).

This sequence belongs to the universal ribosomal protein uS3 family. In terms of assembly, part of the 30S ribosomal subunit. Forms a tight complex with proteins S10 and S14.

Functionally, binds the lower part of the 30S subunit head. Binds mRNA in the 70S ribosome, positioning it for translation. The polypeptide is Small ribosomal subunit protein uS3 (Pediococcus pentosaceus (strain ATCC 25745 / CCUG 21536 / LMG 10740 / 183-1w)).